A 61-amino-acid polypeptide reads, in one-letter code: Truncated 3-beta hydroxy-5-ene steroid dehydrogenase homolog (61 aa).

The protein belongs to the 3-beta-HSD family.

This chain is Truncated 3-beta hydroxy-5-ene steroid dehydrogenase homolog, found in Variola virus (isolate Human/India/Ind3/1967) (VARV).